A 762-amino-acid chain; its full sequence is ABC-type oligopeptide transporter ABCB9 (762 aa).

The next 8 membrane-spanning stretches (helical) occupy residues 7 to 27 (VVVT…IYAF), 47 to 67 (VLDL…ATIG), 84 to 104 (LVIT…LLLF), 116 to 136 (FWAL…LWGL), 181 to 201 (VAFL…ETFL), 221 to 241 (FTTA…AAGI), 315 to 335 (VFMF…FPII), and 412 to 432 (SGLT…HLVI). Residues 184–467 (LVAASFFLIV…VGSVYSGLMQ (284 aa)) enclose the ABC transmembrane type-1 domain. One can recognise an ABC transporter domain in the interval 500 to 736 (VDFENVTFTY…GGLYAKLVQR (237 aa)). 535–542 (GPSGSGKS) lines the ATP pocket.

The protein belongs to the ABC transporter superfamily. ABCB family. MHC peptide exporter (TC 3.A.1.209) subfamily. Homodimer. Interacts (via TMD0 region) with LAMP1; this interaction strongly stabilizes ABCB9 and protects ABCB9 against lysosomal degradation. Interacts (via TMD0 region) with LAMP2 (isoform LAMP-2B). Interacts (via TMD0) with YIF1B; this interaction allows (but is not essential) the ER-to-Golgi trafficking and strongly depends on a salt bridge within TMD0. As to expression, highly expressed in testis, particularly in the Sertoli cells of the seminiferous tubules, and at moderate levels in brain and spinal cord.

It localises to the lysosome membrane. It catalyses the reaction a [oligopeptide](in) + ATP + H2O = a [oligopeptide](out) + ADP + phosphate + H(+). Its function is as follows. ATP-dependent low-affinity peptide transporter which translocates a broad spectrum of peptides from the cytosol to the lysosomal lumen for degradation. Displays a broad peptide length specificity from 6-mer up to at least 59-mer peptides with an optimum of 23-mers. Binds and transports smaller and larger peptides with the same affinity. Favors positively charged, aromatic or hydrophobic residues in the N- and C-terminal positions whereas negatively charged residues as well as asparagine and methionine are not favored. In Mus musculus (Mouse), this protein is ABC-type oligopeptide transporter ABCB9.